Consider the following 292-residue polypeptide: 11-beta-hydroxysteroid dehydrogenase 1 (292 aa).

Topologically, residues 1 to 7 (MAFMKKY) are cytoplasmic. The helical; Signal-anchor for type II membrane protein transmembrane segment at 8 to 24 (LLPILGLFMAYYYYSAN) threads the bilayer. The Lumenal portion of the chain corresponds to 25 to 292 (EEFRPEMLQG…SYNMDRFINK (268 aa)). NADP(+)-binding positions include 41–67 (GASKGIGREMAYHLAKMGAHVVVTARS), 92–93 (TM), and 119–121 (NHI). Asn-123 and Asn-162 each carry an N-linked (GlcNAc...) asparagine glycan. Ser-170 contributes to the substrate binding site. The active-site Proton acceptor is the Tyr-183. Residue 183–187 (YSASK) coordinates NADP(+). Asn-207 carries N-linked (GlcNAc...) asparagine glycosylation. An NADP(+)-binding site is contributed by 218–222 (IDTET).

It belongs to the short-chain dehydrogenases/reductases (SDR) family. Homodimer. In terms of processing, glycosylated. In terms of tissue distribution, widely expressed, highest expression in liver, lower in testis, ovary, lung, foreskin fibroblasts, and much lower in kidney. Expressed in liver (at protein level). Expressed in the basal cells of the corneal epithelium and in the ciliary nonpigmented epithelium (both at mRNA and at protein level).

It is found in the endoplasmic reticulum membrane. It carries out the reaction an 11beta-hydroxysteroid + NADP(+) = an 11-oxosteroid + NADPH + H(+). It catalyses the reaction cortisone + NADPH + H(+) = cortisol + NADP(+). The catalysed reaction is corticosterone + NADP(+) = 11-dehydrocorticosterone + NADPH + H(+). The enzyme catalyses a 7beta-hydroxysteroid + NADP(+) = a 7-oxosteroid + NADPH + H(+). It carries out the reaction 7-oxocholesterol + NADPH + H(+) = 7beta-hydroxycholesterol + NADP(+). It catalyses the reaction chenodeoxycholate + NADP(+) = 7-oxolithocholate + NADPH + H(+). The catalysed reaction is 7-oxolithocholate + NADPH + H(+) = ursodeoxycholate + NADP(+). The enzyme catalyses glycochenodeoxycholate + NADP(+) = 7-oxoglycolithocholate + NADPH + H(+). It carries out the reaction taurochenodeoxycholate + NADP(+) = 7-oxotaurolithocholate + NADPH + H(+). It catalyses the reaction tauroursodeoxycholate + NADP(+) = 7-oxotaurolithocholate + NADPH + H(+). The catalysed reaction is glycoursodeoxycholate + NADP(+) = 7-oxoglycolithocholate + NADPH + H(+). The enzyme catalyses 7-oxopregnenolone + NADPH + H(+) = 7beta-hydroxypregnenolone + NADP(+). It carries out the reaction 3beta,7alpha-dihydroxyandrost-5-en-17-one + NADP(+) = 3beta-hydroxy-5-androstene-7,17-dione + NADPH + H(+). It catalyses the reaction 3beta-hydroxy-5-androstene-7,17-dione + NADPH + H(+) = 3beta,7beta-dihydroxyandrost-5-en-17-one + NADP(+). The catalysed reaction is 3beta-hydroxy-5alpha-androstane-7,17-dione + NADPH + H(+) = 3beta,7beta-dihydroxy-5alpha-androstan-17-one + NADP(+). Its pathway is steroid metabolism. Hexose-6-phosphate dehydrogenase (H6PD) provides cosubstrate NADPH, and the glucose-6-phosphate transporter in the ER-membrane supplies the substrate for H6PDH, their activities stimulate the reduction of cortisone and abolish the oxidation of cortisol. Controls the reversible conversion of biologically active glucocorticoids such as cortisone to cortisol, and 11-dehydrocorticosterone to corticosterone in the presence of NADP(H). Participates in the corticosteroid receptor-mediated anti-inflammatory response, as well as metabolic and homeostatic processes. Plays a role in the secretion of aqueous humor in the eye, maintaining a normotensive, intraocular environment. Bidirectional in vitro, predominantly functions as a reductase in vivo, thereby increasing the concentration of active glucocorticoids. It has broad substrate specificity, besides glucocorticoids, it accepts other steroid and sterol substrates. Interconverts 7-oxo- and 7-hydroxy-neurosteroids such as 7-oxopregnenolone and 7beta-hydroxypregnenolone, 7-oxodehydroepiandrosterone (3beta-hydroxy-5-androstene-7,17-dione) and 7beta-hydroxydehydroepiandrosterone (3beta,7beta-dihydroxyandrost-5-en-17-one), among others. Catalyzes the stereo-specific conversion of the major dietary oxysterol, 7-ketocholesterol (7-oxocholesterol), into the more polar 7-beta-hydroxycholesterol metabolite. 7-oxocholesterol is one of the most important oxysterols, it participates in several events such as induction of apoptosis, accumulation in atherosclerotic lesions, lipid peroxidation, and induction of foam cell formation. Mediates the 7-oxo reduction of 7-oxolithocholate mainly to chenodeoxycholate, and to a lesser extent to ursodeoxycholate, both in its free form and when conjugated to glycine or taurine, providing a link between glucocorticoid activation and bile acid metabolism. Catalyzes the synthesis of 7-beta-25-dihydroxycholesterol from 7-oxo-25-hydroxycholesterol in vitro, which acts as a ligand for the G-protein-coupled receptor (GPCR) Epstein-Barr virus-induced gene 2 (EBI2) and may thereby regulate immune cell migration. The protein is 11-beta-hydroxysteroid dehydrogenase 1 of Homo sapiens (Human).